We begin with the raw amino-acid sequence, 1105 residues long: Pheromone-regulated membrane protein 10 (1105 aa).

Positions 1 to 11 (MSDNRPTYDTS) are enriched in polar residues. Disordered regions lie at residues 1–22 (MSDN…NHFH), 36–55 (RKQN…TASN), 65–123 (GSNH…FYGD), 151–278 (IKPK…GGGL), 385–473 (AGAS…FLRG), and 520–656 (EQKS…LRHK). Residues 67 to 82 (NHKFGNSINNNNNNAN) are compositionally biased toward low complexity. Residues 85–106 (LGSSSAGTNRRSLISPTSSTHV) show a composition bias toward polar residues. The segment covering 162-178 (DSSDDDGNNLDEVEDET) has biased composition (acidic residues). Polar residues predominate over residues 185–197 (LNQNHPPQQYYET). Residues 198 to 210 (DSSDEDEEDDDEV) show a composition bias toward acidic residues. Residues 390–413 (LDHSQQSSAAPSTEITPSQSPNQH) are compositionally biased toward polar residues. The span at 417 to 439 (EKSNNNENNQQSTTVESSSSTSS) shows a compositional bias: low complexity. A compositionally biased stretch (basic and acidic residues) spans 446 to 459 (LARRRASEERKKAE). 3 stretches are compositionally biased toward polar residues: residues 520–539 (EQKS…GTAL), 592–606 (RTNT…NSEE), and 624–633 (MNANLPSFQN). The next 10 membrane-spanning stretches (helical) occupy residues 782-802 (PPWL…PFAF), 809-829 (LPIS…VSSI), 835-855 (SVFE…IGSI), 860-880 (LFCF…GYII), 903-923 (VIYS…YGWI), 938-958 (AIDE…LGLI), 963-983 (WSQV…SFFA), 986-1006 (HFST…GVLG), 1015-1035 (GMAV…GIAS), and 1075-1095 (VEVS…IYPF).

It belongs to the ThrE exporter (TC 2.A.79) family.

The protein resides in the membrane. The chain is Pheromone-regulated membrane protein 10 (PRM10) from Candida albicans (strain SC5314 / ATCC MYA-2876) (Yeast).